The primary structure comprises 475 residues: Aspartyl/glutamyl-tRNA(Asn/Gln) amidotransferase subunit B (475 aa).

It belongs to the GatB/GatE family. GatB subfamily. Heterotrimer of A, B and C subunits.

The catalysed reaction is L-glutamyl-tRNA(Gln) + L-glutamine + ATP + H2O = L-glutaminyl-tRNA(Gln) + L-glutamate + ADP + phosphate + H(+). The enzyme catalyses L-aspartyl-tRNA(Asn) + L-glutamine + ATP + H2O = L-asparaginyl-tRNA(Asn) + L-glutamate + ADP + phosphate + 2 H(+). Allows the formation of correctly charged Asn-tRNA(Asn) or Gln-tRNA(Gln) through the transamidation of misacylated Asp-tRNA(Asn) or Glu-tRNA(Gln) in organisms which lack either or both of asparaginyl-tRNA or glutaminyl-tRNA synthetases. The reaction takes place in the presence of glutamine and ATP through an activated phospho-Asp-tRNA(Asn) or phospho-Glu-tRNA(Gln). The protein is Aspartyl/glutamyl-tRNA(Asn/Gln) amidotransferase subunit B of Agathobacter rectalis (strain ATCC 33656 / DSM 3377 / JCM 17463 / KCTC 5835 / VPI 0990) (Eubacterium rectale).